Reading from the N-terminus, the 356-residue chain is UDP-3-O-acylglucosamine N-acyltransferase (356 aa).

Catalysis depends on histidine 242, which acts as the Proton acceptor.

It belongs to the transferase hexapeptide repeat family. LpxD subfamily. As to quaternary structure, homotrimer.

It catalyses the reaction a UDP-3-O-[(3R)-3-hydroxyacyl]-alpha-D-glucosamine + a (3R)-hydroxyacyl-[ACP] = a UDP-2-N,3-O-bis[(3R)-3-hydroxyacyl]-alpha-D-glucosamine + holo-[ACP] + H(+). Its pathway is bacterial outer membrane biogenesis; LPS lipid A biosynthesis. Functionally, catalyzes the N-acylation of UDP-3-O-acylglucosamine using 3-hydroxyacyl-ACP as the acyl donor. Is involved in the biosynthesis of lipid A, a phosphorylated glycolipid that anchors the lipopolysaccharide to the outer membrane of the cell. In Acinetobacter baumannii (strain AB0057), this protein is UDP-3-O-acylglucosamine N-acyltransferase.